Consider the following 184-residue polypeptide: Cytidylate kinase (184 aa).

Residue 8–16 (GQPGSGKTT) coordinates ATP.

Belongs to the cytidylate kinase family. Type 2 subfamily.

It is found in the cytoplasm. The enzyme catalyses CMP + ATP = CDP + ADP. It catalyses the reaction dCMP + ATP = dCDP + ADP. This Pyrobaculum arsenaticum (strain DSM 13514 / JCM 11321 / PZ6) protein is Cytidylate kinase.